We begin with the raw amino-acid sequence, 186 residues long: Transcriptional repressor NrdR (186 aa).

A zinc finger lies at 3–34 (CPFCRHPDSRVVDSREAEEGAAIRRRRSCPAC). The region spanning 46 to 136 (LRVRKRSGAT…VYLAFESLGD (91 aa)) is the ATP-cone domain. Positions 149–169 (AGGGEPPVAGKPTTMPAATGA) are disordered.

Belongs to the NrdR family. It depends on Zn(2+) as a cofactor.

Negatively regulates transcription of bacterial ribonucleotide reductase nrd genes and operons by binding to NrdR-boxes. The polypeptide is Transcriptional repressor NrdR (Parafrankia sp. (strain EAN1pec)).